The sequence spans 364 residues: C2 calcium-dependent domain-containing protein 4A (364 aa).

Disordered stretches follow at residues 118–175 and 192–242; these read GSPS…PPRC and AGRS…RPER. Positions 220 to 233 are enriched in polar residues; sequence SPGSPTQAPVTSLS. One can recognise a C2 domain in the interval 254 to 364; it reads AGGALRLAAE…ELLLGPLLLL (111 aa).

This sequence belongs to the C2CD4 family.

It is found in the nucleus. In terms of biological role, may be involved in inflammatory process. May regulate cell architecture and adhesion. This Bos taurus (Bovine) protein is C2 calcium-dependent domain-containing protein 4A (C2CD4A).